The following is a 597-amino-acid chain: Elongation factor 4 (597 aa).

The region spanning 2 to 184 is the tr-type G domain; the sequence is DHIRNFSIIA…ALVAKVPPPK (183 aa). GTP-binding positions include 14–19 and 131–134; these read DHGKST and NKID.

Belongs to the TRAFAC class translation factor GTPase superfamily. Classic translation factor GTPase family. LepA subfamily.

The protein resides in the cell inner membrane. It catalyses the reaction GTP + H2O = GDP + phosphate + H(+). In terms of biological role, required for accurate and efficient protein synthesis under certain stress conditions. May act as a fidelity factor of the translation reaction, by catalyzing a one-codon backward translocation of tRNAs on improperly translocated ribosomes. Back-translocation proceeds from a post-translocation (POST) complex to a pre-translocation (PRE) complex, thus giving elongation factor G a second chance to translocate the tRNAs correctly. Binds to ribosomes in a GTP-dependent manner. The chain is Elongation factor 4 from Paraburkholderia phytofirmans (strain DSM 17436 / LMG 22146 / PsJN) (Burkholderia phytofirmans).